A 108-amino-acid chain; its full sequence is MKRVTLIVLPRRQFPFLKFHSKEALESAVNLQLIRRKKSVNIQIDSVTFCIYFCLLYFRTLEYHRGTISLHNVTGSKKRDSKANSRSRPSGTITSRGARIGLQGYKSH.

The tract at residues 74–108 (TGSKKRDSKANSRSRPSGTITSRGARIGLQGYKSH) is disordered. The segment covering 84–95 (NSRSRPSGTITS) has biased composition (polar residues).

This is an uncharacterized protein from Saccharomyces cerevisiae (strain ATCC 204508 / S288c) (Baker's yeast).